Here is a 1170-residue protein sequence, read N- to C-terminus: MFFYLSKKIAVPNNVKLKCISWNKDQGFIACGGEDGLLKVLRLETQTDDSKLRGLAAPSNLSMNQNLEGHSGAVQVVTWNEQYQKLTTSDQNGLIIVWMLYKGSWYEEMINNRNKSVVRSMSWNADGQKICIVYEDGAVIVGSVDGNRIWGKDLKGIQLCHVTWSADSKILLFGMANGEIHIYDNQGNFIMKMKLNCLVNVTGAISIAGIHWYHGTEGYVEPDCPCLAICFDNGRCQIMRHENDQNPVLIDTGMYVVGIQWNHIGSVLAVAGSQKVVTQDKDVNIVQFYTPFGEHLGTLKVPGKQMCSLSWEGGGLKIALAVDSFIYFANIRPDYKWGYCSNTVVYAYTRPDRPEYCVVFWDTKNNEKYVKYVKSLISITTCGDFCILATKADENHPQFVLVLCNSIGTPLDPKYIDLVPLFVAMTKTHVIAASKEALYTWQYRVAKKLTALEINQITRSRKEGRERIYHVDDVPSGSVDGVFDYSKAIQGTRDPICAITASDKTLIVGRESGVIQRYSFPNVALIQKYSLDCRACQLSLNCNSSRLAIIDIAGVLTFFDLDTRVTDSTGQQVVGELLKLERKDVWDMKWAKDNPDLFAMMEKTRMYVFRNLDPEEPIQTSGYICNFEDLEIKSVLLDEILKNPEHPSKDYIMNFEIRSLRDSRALIEKVGIEDASQFIEDNPHPRLWRLLAEAALQKLDLYTAQQAFVRCKDYQGIKFVKRLGNLQSESMKQAEVIAYFGRFEEAERMYLDMDRRDLAIGLRLKLGDWFRVLQLLKTGSGDADDSLLEQAHNAIGDYFADRQKWMNAVQYYVKGRNQERLAECYYMLEDYEGLENLANSLPENHKLLPEIAQMFVRVGMCEQAVSAFLKCNQPKAAVDTCVHLNQWNKAVELAKSHSMKEIGSLLARYASHLLEKNKTLDAIELYRKASYFFDAAKLMYKIADEEAKKRTKPLRVKKLYVLSALLIEQYHEQMKNAQRGKVKGKNSEATSALAGLLEEEVLSTTSRFTDNAWRGAEAYHFFILAQRQLYEGYVDTALKTALHLRDYEDIIPSVEIYSLLALCACASRAFGTCSKAFIKLESLETLSAEQKQQYEDLALEIFTKHTPKDNRKSELNSLLEGGEGKLPTCIATGSPIIEYQFWVCKVCKHYVLAQEISNYNFCPLCHSSVE.

5 WD repeats span residues P12–K51, G69–E108, R113–K152, L154–M193, and G491–K528.

As to quaternary structure, component of the IFT complex A (IFT-A) complex. IFT-A complex is divided into a core subcomplex composed of IFT122:IFT140:WDR19 which is associated with TULP3 and a peripheral subcomplex composed of IFT43:WDR35:TTC21B. Interacts directy with IFT122, ITF43 and TTC21B. Interacts with IFT43. Interacts with CFAP61. In terms of tissue distribution, expressed at high levels in testis and at lower levels in the brain (at protein level). Also present in other tissues, including heart, uterus, spinal cord, ovary, liver, kidney, lung, pancreas and stomach.

Its subcellular location is the cytoplasm. The protein localises to the cytoskeleton. It is found in the microtubule organizing center. It localises to the centrosome. The protein resides in the cilium axoneme. Its subcellular location is the cilium basal body. As a component of the IFT complex A (IFT-A), a complex required for retrograde ciliary transport and entry into cilia of G protein-coupled receptors (GPCRs), it is involved in ciliogenesis and ciliary protein trafficking. May promote CASP3 activation and TNF-stimulated apoptosis. The protein is WD repeat-containing protein 35 (Wdr35) of Rattus norvegicus (Rat).